A 638-amino-acid chain; its full sequence is MEEKRSSCPYADEAVCELVEHAKELNEEIPEIETPHIRWPVQFPKCPYGKQGVWCNICSNGPCRITEKTPRGVCGATADVIVARNFLRHVAAGAACYVHCLENAARALKSVADEESPYEIADEKALRHAAEVYGLDTSGKPEDVAEEIAEFILEDIYRPRYEESEVFKAVVPDWRIEMYEEMGLIPGGAKSEIHDALVKTSTNLNSDPVDMLLHVLRLGLITGPVALFGVETINDILFGSPKITQTEGGPGILDPDYVNIMTTGHQMALMKYLTDAAEKLEEEAKAAGAKGIRIIGATCVGDDFEARAEHLPDTYAGFAGNNFATEALAATGLVDAIVSEFNCTFPGLKFYKEKLDVELVAVDDVAKVWGAELILWDPERAEEVAEEAVQRAIEAFKERRSKHEDKIMEPKHRHENVVGFGYFSIEEAVGWENVLKLIEEGTIRGVCAIMGCTNLSSGGHNVPAVELAKEMIKRDVLVLGAGCVNGAFANAGLFNPEAAELAGDNLRQVCEELGIPPVLHYGPCLAIGKIEHLVFEIAEILREKTGEEIDIPDVPAVASAPQWLEEQALADASSALALGITLHVSPVPPVTGSELVTKTLLEDLPDLTGGELIVETDMKRAGEILAEKIEEKRKRLGI.

The [4Fe-4S] cluster site is built by Cys46, Cys55, Cys58, Cys63, and Cys74. His265, Cys299, Cys343, Cys452, Cys483, and Cys524 together coordinate [Ni-4Fe-5S] cluster.

This sequence belongs to the Ni-containing carbon monoxide dehydrogenase family. In terms of assembly, homodimer. Requires [4Fe-4S] cluster as cofactor. The cofactor is [Ni-4Fe-5S] cluster.

It catalyses the reaction CO + 2 oxidized [2Fe-2S]-[ferredoxin] + H2O = 2 reduced [2Fe-2S]-[ferredoxin] + CO2 + 2 H(+). CODH oxidizes carbon monoxide coupled, via CooF, to the reduction of a hydrogen cation by a hydrogenase (possibly CooH). The chain is Carbon monoxide dehydrogenase (cooS) from Methanopyrus kandleri (strain AV19 / DSM 6324 / JCM 9639 / NBRC 100938).